The sequence spans 338 residues: Heat-inducible transcription repressor HrcA (338 aa).

The protein belongs to the HrcA family.

Its function is as follows. Negative regulator of class I heat shock genes (grpE-dnaK-dnaJ and groELS operons). Prevents heat-shock induction of these operons. The polypeptide is Heat-inducible transcription repressor HrcA (Thermotoga maritima (strain ATCC 43589 / DSM 3109 / JCM 10099 / NBRC 100826 / MSB8)).